The following is a 418-amino-acid chain: Gamma-glutamyl phosphate reductase (418 aa).

The protein belongs to the gamma-glutamyl phosphate reductase family.

It localises to the cytoplasm. The catalysed reaction is L-glutamate 5-semialdehyde + phosphate + NADP(+) = L-glutamyl 5-phosphate + NADPH + H(+). The protein operates within amino-acid biosynthesis; L-proline biosynthesis; L-glutamate 5-semialdehyde from L-glutamate: step 2/2. Catalyzes the NADPH-dependent reduction of L-glutamate 5-phosphate into L-glutamate 5-semialdehyde and phosphate. The product spontaneously undergoes cyclization to form 1-pyrroline-5-carboxylate. This Teredinibacter turnerae (strain ATCC 39867 / T7901) protein is Gamma-glutamyl phosphate reductase.